The sequence spans 197 residues: Large ribosomal subunit protein uL22 (197 aa).

The disordered stretch occupies residues Glu-118–Asp-197. Residues Ala-149–Ala-165 show a composition bias toward low complexity. Over residues Thr-172–Pro-183 the composition is skewed to basic residues. A compositionally biased stretch (low complexity) spans Ala-184–Asp-197.

The protein belongs to the universal ribosomal protein uL22 family. In terms of assembly, part of the 50S ribosomal subunit.

Its function is as follows. This protein binds specifically to 23S rRNA; its binding is stimulated by other ribosomal proteins, e.g. L4, L17, and L20. It is important during the early stages of 50S assembly. It makes multiple contacts with different domains of the 23S rRNA in the assembled 50S subunit and ribosome. The globular domain of the protein is located near the polypeptide exit tunnel on the outside of the subunit, while an extended beta-hairpin is found that lines the wall of the exit tunnel in the center of the 70S ribosome. The polypeptide is Large ribosomal subunit protein uL22 (Mycobacterium bovis (strain ATCC BAA-935 / AF2122/97)).